The sequence spans 236 residues: Sugar fermentation stimulation protein homolog (236 aa).

The protein belongs to the SfsA family.

The sequence is that of Sugar fermentation stimulation protein homolog from Gloeobacter violaceus (strain ATCC 29082 / PCC 7421).